A 103-amino-acid chain; its full sequence is MYAVIVSGGKQHRVKEGETLKLEKLEVETGGSVEFDRVLLVANGDDVKVGAPVVEGAKVTAEVVSHGRHDKVNIIKFRRRKHHMKRQGHRQWFTEVKITGIQG.

The protein belongs to the bacterial ribosomal protein bL21 family. Part of the 50S ribosomal subunit. Contacts protein L20.

This protein binds to 23S rRNA in the presence of protein L20. In Marinobacter nauticus (strain ATCC 700491 / DSM 11845 / VT8) (Marinobacter aquaeolei), this protein is Large ribosomal subunit protein bL21.